The chain runs to 263 residues: (R)-S-adenosyl-L-methionine hydrolase (263 aa).

3 residues coordinate adenosine: Asp18, Asp82, and Asn181. Positions 181, 221, 234, 239, and 244 each coordinate (R)-S-adenosyl-L-methionine.

Belongs to the SAM hydrolase / SAM-dependent halogenase family. As to quaternary structure, homotrimer.

The enzyme catalyses (R)-S-adenosyl-L-methionine + H2O = adenosine + L-methionine + H(+). Its function is as follows. Catalyzes the hydrolysis of S-adenosyl-L-methionine (SAM) into adenosine and L-methionine. Does not have chlorinase or fluorinase activity. This is (R)-S-adenosyl-L-methionine hydrolase from Methanocaldococcus jannaschii (strain ATCC 43067 / DSM 2661 / JAL-1 / JCM 10045 / NBRC 100440) (Methanococcus jannaschii).